Consider the following 126-residue polypeptide: Glycine cleavage system H protein (126 aa).

The Lipoyl-binding domain occupies 22-104 (VAYVGITDYA…YGEGWLIKMK (83 aa)). Residue lysine 63 is modified to N6-lipoyllysine.

The protein belongs to the GcvH family. As to quaternary structure, the glycine cleavage system is composed of four proteins: P, T, L and H. Requires (R)-lipoate as cofactor.

Its function is as follows. The glycine cleavage system catalyzes the degradation of glycine. The H protein shuttles the methylamine group of glycine from the P protein to the T protein. This chain is Glycine cleavage system H protein, found in Bacteroides fragilis (strain ATCC 25285 / DSM 2151 / CCUG 4856 / JCM 11019 / LMG 10263 / NCTC 9343 / Onslow / VPI 2553 / EN-2).